A 363-amino-acid chain; its full sequence is MSALLEQKEQQERLREAAALGDIREVQKLVESGVDVNSQNEVNGWTCLHWACKRNHGQVVSYLLQSGADREILTTKGEMPVQLTSRREIRKIMGVEEADEEEEIPQLKKESELPFVPNYLANPAFPFIYTPAAEDSTQLQNGGPSPPPVSPPADSSPPLLPPTETPLLGAFPRDHSSLALVQNGDISAPSAILRTPESTKPGPVCQPPVSQNRSLFSVPSKPPVSLEPQNGTYAGPAPAFQPFFFTGAFPFNMQELVLKVRIQNPSLRENDFIEIELDRQELTYQELLRVSCCELGVNPDQVEKIRKLPNTLLRKDKDVARLQDFQELELVLMISDNNFLFRNAASTLTERPCYNRRASKLTY.

Met1 is modified (N-acetylmethionine). ANK repeat units lie at residues 9–38 and 43–72; these read EQQE…DVNS and NGWT…DREI. A disordered region spans residues 135 to 167; that stretch reads DSTQLQNGGPSPPPVSPPADSSPPLLPPTETPL. Positions 144–164 are enriched in pro residues; that stretch reads PSPPPVSPPADSSPPLLPPTE. Ser176 carries the phosphoserine modification.

The polypeptide is Ankyrin repeat domain-containing protein 40 (Ankrd40) (Mus musculus (Mouse)).